Reading from the N-terminus, the 511-residue chain is Glucans biosynthesis protein G (511 aa).

An N-terminal signal peptide occupies residues 1–22 (MMKMRWLGAAIMLTLYASSSWA).

It belongs to the OpgD/OpgG family.

It is found in the periplasm. Its pathway is glycan metabolism; osmoregulated periplasmic glucan (OPG) biosynthesis. Functionally, involved in the biosynthesis of osmoregulated periplasmic glucans (OPGs). The sequence is that of Glucans biosynthesis protein G from Salmonella paratyphi A (strain ATCC 9150 / SARB42).